The primary structure comprises 198 residues: ATP-dependent Clp protease proteolytic subunit (198 aa).

Residue Ser98 is the Nucleophile of the active site. His123 is an active-site residue.

It belongs to the peptidase S14 family. As to quaternary structure, fourteen ClpP subunits assemble into 2 heptameric rings which stack back to back to give a disk-like structure with a central cavity, resembling the structure of eukaryotic proteasomes.

It localises to the cytoplasm. It catalyses the reaction Hydrolysis of proteins to small peptides in the presence of ATP and magnesium. alpha-casein is the usual test substrate. In the absence of ATP, only oligopeptides shorter than five residues are hydrolyzed (such as succinyl-Leu-Tyr-|-NHMec, and Leu-Tyr-Leu-|-Tyr-Trp, in which cleavage of the -Tyr-|-Leu- and -Tyr-|-Trp bonds also occurs).. Its function is as follows. Cleaves peptides in various proteins in a process that requires ATP hydrolysis. Has a chymotrypsin-like activity. Plays a major role in the degradation of misfolded proteins. The polypeptide is ATP-dependent Clp protease proteolytic subunit (Listeria monocytogenes serovar 1/2a (strain ATCC BAA-679 / EGD-e)).